A 936-amino-acid polypeptide reads, in one-letter code: E3 ubiquitin-protein ligase ZNRF3 (936 aa).

The tract at residues 1 to 31 is disordered; that stretch reads MRPRSGGRPGATGRRRRRLRRRPRGLRCSRL. The N-terminal stretch at 1–55 is a signal peptide; that stretch reads MRPRSGGRPGATGRRRRRLRRRPRGLRCSRLPPPPPLPLLLGLLLAAAGPGAARA. The segment covering 13-27 has biased composition (basic residues); sequence GRRRRRLRRRPRGLR. Over 56 to 219 the chain is Extracellular; the sequence is KETAFVEVVL…PRQPTEYFDM (164 aa). Residues 220 to 240 traverse the membrane as a helical segment; it reads GIFLAFFVVVSLVCLILLVKI. At 241 to 936 the chain is on the cytoplasmic side; sequence KLKQRRSQNS…HSADSSSPGA (696 aa). Residues 293 to 334 form an RING-type; atypical zinc finger; that stretch reads CAICLEKYIDGEELRVIPCTHRFHRKCVDPWLLQHHTCPHCR. Disordered regions lie at residues 608 to 693, 739 to 758, 849 to 875, and 892 to 936; these read SEAG…SPGA, LYEGSGPAGGEPQSGSSQGL, THSLGSWGGTRGPDTPRPHRGLGATRE, and CPPE…SPGA. Over residues 654 to 684 the composition is skewed to polar residues; it reads SGDQVSTCSLEMNYSSNSSLEHRGPNSSTSE. The segment covering 913 to 922 has biased composition (low complexity); that stretch reads ESSTTATEAA.

It belongs to the ZNRF3 family. As to quaternary structure, interacts with LRP6, FZD4, FZD5, FZD6 and FZD8. Interacts with RSPO1; interaction promotes indirect interaction with LGR4 and membrane clearance of ZNRF3. Also interacts with RSPO2. Interacts with LMBR1L.

The protein localises to the cell membrane. The catalysed reaction is S-ubiquitinyl-[E2 ubiquitin-conjugating enzyme]-L-cysteine + [acceptor protein]-L-lysine = [E2 ubiquitin-conjugating enzyme]-L-cysteine + N(6)-ubiquitinyl-[acceptor protein]-L-lysine.. It functions in the pathway protein modification; protein ubiquitination. Its activity is regulated as follows. Negatively regulated by R-spondin proteins such as RSPO1: interaction with RSPO1 induces the indirect association between ZNRF3 and LGR4, promoting membrane clearance of ZNRF3. E3 ubiquitin-protein ligase that acts as a negative regulator of the Wnt signaling pathway by mediating the ubiquitination and subsequent degradation of Wnt receptor complex components Frizzled and LRP6. Acts on both canonical and non-canonical Wnt signaling pathway. Acts as a tumor suppressor in the intestinal stem cell zone by inhibiting the Wnt signaling pathway, thereby restricting the size of the intestinal stem cell zone. Along with RSPO2 and RNF43, constitutes a master switch that governs limb specification. The protein is E3 ubiquitin-protein ligase ZNRF3 (ZNRF3) of Homo sapiens (Human).